We begin with the raw amino-acid sequence, 36 residues long: Potassium channel toxin alpha-KTx 1.9 (36 aa).

It belongs to the short scorpion toxin superfamily. Potassium channel inhibitor family. Alpha-KTx 01 subfamily. In terms of tissue distribution, expressed by the venom gland.

Its subcellular location is the secreted. In terms of biological role, potent selective inhibitor of Kv1/KCNA voltage-gated potassium channels. This Centruroides limbatus (Bark scorpion) protein is Potassium channel toxin alpha-KTx 1.9.